The following is a 214-amino-acid chain: Probable nicotinate-nucleotide adenylyltransferase (214 aa).

The protein belongs to the NadD family.

It carries out the reaction nicotinate beta-D-ribonucleotide + ATP + H(+) = deamido-NAD(+) + diphosphate. It functions in the pathway cofactor biosynthesis; NAD(+) biosynthesis; deamido-NAD(+) from nicotinate D-ribonucleotide: step 1/1. Its function is as follows. Catalyzes the reversible adenylation of nicotinate mononucleotide (NaMN) to nicotinic acid adenine dinucleotide (NaAD). The protein is Probable nicotinate-nucleotide adenylyltransferase of Aeromonas salmonicida (strain A449).